The chain runs to 290 residues: Beta-lactamase OXY-2 (290 aa).

The N-terminal stretch at 1–27 is a signal peptide; the sequence is MIKSSWRKIAMLAAAVPLLLASGALWA. S72 acts as the Acyl-ester intermediate in catalysis. 236-238 is a binding site for substrate; sequence KTG.

This sequence belongs to the class-A beta-lactamase family.

It carries out the reaction a beta-lactam + H2O = a substituted beta-amino acid. Its function is as follows. Hydrolyzes broad-spectrum beta-lactam antibiotics. Active against all third-generation cephalosporins but ceftazidime. This is Beta-lactamase OXY-2 (bla) from Klebsiella oxytoca.